We begin with the raw amino-acid sequence, 413 residues long: Glucose-1-phosphate adenylyltransferase (413 aa).

Alpha-D-glucose 1-phosphate is bound by residues Gly-161, 176 to 177 (EK), and Ser-195.

The protein belongs to the bacterial/plant glucose-1-phosphate adenylyltransferase family. Homotetramer.

It carries out the reaction alpha-D-glucose 1-phosphate + ATP + H(+) = ADP-alpha-D-glucose + diphosphate. It participates in glycan biosynthesis; glycogen biosynthesis. Involved in the biosynthesis of ADP-glucose, a building block required for the elongation reactions to produce glycogen. Catalyzes the reaction between ATP and alpha-D-glucose 1-phosphate (G1P) to produce pyrophosphate and ADP-Glc. The protein is Glucose-1-phosphate adenylyltransferase of Anaeromyxobacter dehalogenans (strain 2CP-C).